Reading from the N-terminus, the 401-residue chain is (1R,4R,5S)-(-)-guaia-6,10(14)-diene synthase (401 aa).

Mg(2+) is bound by residues Asp-134 and Glu-139. Positions 134–138 (DDQFD) match the DDXXD motif motif. Arg-242 contributes to the substrate binding site. Mg(2+) is bound by residues Asn-288 and Ser-292. Lys-295 is a substrate binding site. Asp-296 contributes to the Mg(2+) binding site. 375–376 (RY) contributes to the substrate binding site.

It belongs to the terpene synthase family. The cofactor is Mg(2+).

The catalysed reaction is (2E,6E)-farnesyl diphosphate = (1R,4R,5S)-(-)-guaia-6,10(14)-diene + diphosphate. Its pathway is secondary metabolite biosynthesis; terpenoid biosynthesis. Catalyzes the conversion of (2E,6E)-farnesyl diphosphate (FPP) to yield the bicyclic sesquiterpene guaia-6,10(14)-diene via a 1,10-cyclization, which requires the abstraction of the pyrophosphate from FPP to yield the (E,E)-germacradienyl cation. The only accepted substrate is farnesyl diphosphate (FPP). This is (1R,4R,5S)-(-)-guaia-6,10(14)-diene synthase from Fusarium mangiferae (Mango malformation disease fungus).